A 306-amino-acid polypeptide reads, in one-letter code: MASSSCLWLLALAFLLGSCASLALGHLDPPAPLPLVIWHGMGDSCCNPLSMGAIKKMVEKKIPGIHVLSLEIGKTLREDVENSFFLNVNSQVTTVCQILAKDPKLQQGYNAMGFSQGGQFLRAVAQRCPSPPMVNLISVGGQHQGVFGLPRCPGESSHICDFIRKTLNAGAYNKAIQERLVQAEYWHDPIREDIYRNHSIFLADINQERGVNESYKKNLMALKKFVMVKFLNDTIVDPVDSEWFGFYRSGQAKETIPLQESTLYTQDRLGLKAMDKAGQLVFLALEGDHLQLSEEWFYAHIIPFLE.

The signal sequence occupies residues 1–27 (MASSSCLWLLALAFLLGSCASLALGHL). 3 cysteine pairs are disulfide-bonded: cysteine 45/cysteine 46, cysteine 96/cysteine 128, and cysteine 152/cysteine 160. Serine 115 is an active-site residue. 3 N-linked (GlcNAc...) asparagine glycosylation sites follow: asparagine 197, asparagine 212, and asparagine 232. Active-site residues include aspartate 233 and histidine 289.

Belongs to the palmitoyl-protein thioesterase family. As to quaternary structure, interacts with CLN5, ATP5F1A and ATP5F1B. In terms of processing, glycosylated. As to expression, spleen, brain, seminal vesicle, and testis. Lower levels of activity in liver, heart, lung, and skeletal muscle.

The protein localises to the lysosome. It localises to the secreted. Its subcellular location is the golgi apparatus. It is found in the endoplasmic reticulum. It catalyses the reaction S-hexadecanoyl-L-cysteinyl-[protein] + H2O = L-cysteinyl-[protein] + hexadecanoate + H(+). It carries out the reaction hexadecanoyl-CoA + H2O = hexadecanoate + CoA + H(+). The enzyme catalyses S-hexadecanoyl-N-acetylcysteamine + H2O = N-acetylcysteamine + hexadecanoate + H(+). The catalysed reaction is S-hexadecanoyl-N-acetylcysteine methyl ester + H2O = N-acetylcysteine methyl ester + hexadecanoate + H(+). Palmitoylation reduces PPT1 enzymatic activity. In terms of biological role, has thioesterase activity against fatty acid thioesters with 14 -18 carbons, including palmitoyl-CoA, S-palmitoyl-N-acetylcysteamine, and palmitoylated proteins. In contrast to PPT2, PPT1 can hydrolyze palmitoylated proteins and palmitoylcysteine. This is Palmitoyl-protein thioesterase 1 (PPT1) from Bos taurus (Bovine).